Reading from the N-terminus, the 451-residue chain is Bifunctional protein GlmU (451 aa).

The interval 1–236 (MDQTPSYSPP…YEELRGINSK (236 aa)) is pyrophosphorylase. UDP-N-acetyl-alpha-D-glucosamine-binding positions include 17–20 (LAAG), Lys-31, Gln-79, 84–85 (GT), 105–107 (YGD), Gly-144, Glu-162, Asn-177, and Asn-234. Asp-107 contributes to the Mg(2+) binding site. Asn-234 contacts Mg(2+). Residues 237–257 (VELAEAEATVQIVLRRKALEN) are linker. The tract at residues 258-451 (GVTMTAPETV…EIRRQLKGSV (194 aa)) is N-acetyltransferase. UDP-N-acetyl-alpha-D-glucosamine is bound by residues Arg-323 and Lys-341. The active-site Proton acceptor is His-353. Residues Tyr-356 and Asn-367 each coordinate UDP-N-acetyl-alpha-D-glucosamine. Acetyl-CoA contacts are provided by residues Ala-370, 376–377 (NY), Ser-395, Ala-413, and Arg-430.

This sequence in the N-terminal section; belongs to the N-acetylglucosamine-1-phosphate uridyltransferase family. The protein in the C-terminal section; belongs to the transferase hexapeptide repeat family. Homotrimer. Mg(2+) serves as cofactor.

Its subcellular location is the cytoplasm. It carries out the reaction alpha-D-glucosamine 1-phosphate + acetyl-CoA = N-acetyl-alpha-D-glucosamine 1-phosphate + CoA + H(+). The enzyme catalyses N-acetyl-alpha-D-glucosamine 1-phosphate + UTP + H(+) = UDP-N-acetyl-alpha-D-glucosamine + diphosphate. The protein operates within nucleotide-sugar biosynthesis; UDP-N-acetyl-alpha-D-glucosamine biosynthesis; N-acetyl-alpha-D-glucosamine 1-phosphate from alpha-D-glucosamine 6-phosphate (route II): step 2/2. It participates in nucleotide-sugar biosynthesis; UDP-N-acetyl-alpha-D-glucosamine biosynthesis; UDP-N-acetyl-alpha-D-glucosamine from N-acetyl-alpha-D-glucosamine 1-phosphate: step 1/1. Its pathway is bacterial outer membrane biogenesis; LPS lipid A biosynthesis. Functionally, catalyzes the last two sequential reactions in the de novo biosynthetic pathway for UDP-N-acetylglucosamine (UDP-GlcNAc). The C-terminal domain catalyzes the transfer of acetyl group from acetyl coenzyme A to glucosamine-1-phosphate (GlcN-1-P) to produce N-acetylglucosamine-1-phosphate (GlcNAc-1-P), which is converted into UDP-GlcNAc by the transfer of uridine 5-monophosphate (from uridine 5-triphosphate), a reaction catalyzed by the N-terminal domain. This is Bifunctional protein GlmU from Granulibacter bethesdensis (strain ATCC BAA-1260 / CGDNIH1).